A 253-amino-acid chain; its full sequence is Probable U3 small nucleolar RNA-associated protein 11 (253 aa).

Residues 1–21 are disordered; it reads MAAAFRKAVKSRQREYRERSQ. Residues Lys-74, Lys-83, and Lys-86 each participate in a glycyl lysine isopeptide (Lys-Gly) (interchain with G-Cter in SUMO2) cross-link. A Phosphothreonine modification is found at Thr-90. Residues Lys-103, Lys-120, Lys-143, Lys-144, Lys-180, Lys-211, Lys-218, Lys-235, and Lys-236 each participate in a glycyl lysine isopeptide (Lys-Gly) (interchain with G-Cter in SUMO2) cross-link. Ser-241 carries the phosphoserine modification. Residue Lys-246 forms a Glycyl lysine isopeptide (Lys-Gly) (interchain with G-Cter in SUMO2) linkage.

This sequence belongs to the UTP11 family. As to quaternary structure, part of the small subunit (SSU) processome, composed of more than 70 proteins and the RNA chaperone small nucleolar RNA (snoRNA) U3.

It is found in the nucleus. It localises to the nucleolus. Functionally, part of the small subunit (SSU) processome, first precursor of the small eukaryotic ribosomal subunit. During the assembly of the SSU processome in the nucleolus, many ribosome biogenesis factors, an RNA chaperone and ribosomal proteins associate with the nascent pre-rRNA and work in concert to generate RNA folding, modifications, rearrangements and cleavage as well as targeted degradation of pre-ribosomal RNA by the RNA exosome. Involved in nucleolar processing of pre-18S ribosomal RNA. The sequence is that of Probable U3 small nucleolar RNA-associated protein 11 from Rattus norvegicus (Rat).